The sequence spans 171 residues: UPF0690 protein C1orf52 homolog A (171 aa).

Disordered stretches follow at residues Met-1 to Glu-56 and Asn-126 to Val-171. The span at Glu-47–Glu-56 shows a compositional bias: basic and acidic residues. Positions Glu-146–Gln-160 are enriched in acidic residues.

The protein belongs to the UPF0690 family.

The sequence is that of UPF0690 protein C1orf52 homolog A from Xenopus laevis (African clawed frog).